The following is a 206-amino-acid chain: MKPLTPRQQQVFDLIKSKIDDTGMPPTRAEIARELGFRSANAAEEHLKALARKQAIEIIPGASRGIRILLEDAANDEQGLPLIGQVAAGEPILAQEHVEAHYQVDPAMFKPQADFLLRVNGESMKDIGIMDGDLLAVHKTQDVRDGQVVVARVDDDVTVKRLERKGSTVLLHAENEEFAPIQVDLTSQHLTIEGLAVGIIRNTDWM.

The H-T-H motif DNA-binding region spans 28–48 (RAEIARELGFRSANAAEEHLK). Active-site for autocatalytic cleavage activity residues include serine 123 and lysine 160.

The protein belongs to the peptidase S24 family. As to quaternary structure, homodimer.

The enzyme catalyses Hydrolysis of Ala-|-Gly bond in repressor LexA.. Functionally, represses a number of genes involved in the response to DNA damage (SOS response), including recA and lexA. In the presence of single-stranded DNA, RecA interacts with LexA causing an autocatalytic cleavage which disrupts the DNA-binding part of LexA, leading to derepression of the SOS regulon and eventually DNA repair. In Vibrio parahaemolyticus serotype O3:K6 (strain RIMD 2210633), this protein is LexA repressor.